The following is a 102-amino-acid chain: Large ribosomal subunit protein uL24 (102 aa).

It belongs to the universal ribosomal protein uL24 family. In terms of assembly, part of the 50S ribosomal subunit.

Its function is as follows. One of two assembly initiator proteins, it binds directly to the 5'-end of the 23S rRNA, where it nucleates assembly of the 50S subunit. Functionally, one of the proteins that surrounds the polypeptide exit tunnel on the outside of the subunit. The chain is Large ribosomal subunit protein uL24 from Herpetosiphon aurantiacus (strain ATCC 23779 / DSM 785 / 114-95).